The following is a 265-amino-acid chain: Lipopolysaccharide core heptose(I) kinase WaaP (265 aa).

The active site involves Asp-162.

It belongs to the protein kinase superfamily. KdkA/RfaP family. Requires Mg(2+) as cofactor.

The protein resides in the cell inner membrane. The catalysed reaction is an L-alpha-D-Hep-(1-&gt;3)-L-alpha-D-Hep-(1-&gt;5)-[alpha-Kdo-(2-&gt;4)]-alpha-Kdo-(2-&gt;6)-lipid A + ATP = an L-alpha-D-Hep-(1-&gt;3)-4-O-phospho-L-alpha-D-Hep-(1-&gt;5)-[alpha-Kdo-(2-&gt;4)]-alpha-Kdo-(2-&gt;6)-lipid A + ADP + H(+). It catalyses the reaction L-alpha-D-Hep-(1-&gt;3)-L-alpha-D-Hep-(1-&gt;5)-[alpha-Kdo-(2-&gt;4)]-alpha-Kdo-(2-&gt;6)-lipid A (E. coli) + ATP = L-alpha-D-Hep-(1-&gt;3)-4-O-phospho-L-alpha-D-Hep-(1-&gt;5)-[alpha-Kdo-(2-&gt;4)]-alpha-Kdo-(2-&gt;6)-lipid A (E. coli) + ADP + H(+). The protein operates within bacterial outer membrane biogenesis; LPS core biosynthesis. In terms of biological role, kinase involved in the biosynthesis of the core oligosaccharide region of lipopolysaccharide (LPS). Catalyzes the phosphorylation of heptose I (HepI), the first heptose added to the Kdo2-lipid A module. The polypeptide is Lipopolysaccharide core heptose(I) kinase WaaP (Escherichia coli).